The sequence spans 727 residues: Phosphoribosylformylglycinamidine synthase subunit PurL (727 aa).

His-47 is a catalytic residue. ATP-binding residues include Tyr-50 and Lys-89. Residue Glu-91 participates in Mg(2+) binding. Substrate-binding positions include 92–95 (SHNH) and Arg-114. Residue His-93 is the Proton acceptor of the active site. Asp-115 is a Mg(2+) binding site. Position 238 (Gln-238) interacts with substrate. Asp-266 is a Mg(2+) binding site. 310–312 (ESQ) lines the substrate pocket. Residues Asp-490 and Gly-527 each coordinate ATP. Asn-528 is a Mg(2+) binding site. Residue Ser-530 coordinates substrate.

Belongs to the FGAMS family. As to quaternary structure, monomer. Part of the FGAM synthase complex composed of 1 PurL, 1 PurQ and 2 PurS subunits.

The protein resides in the cytoplasm. The catalysed reaction is N(2)-formyl-N(1)-(5-phospho-beta-D-ribosyl)glycinamide + L-glutamine + ATP + H2O = 2-formamido-N(1)-(5-O-phospho-beta-D-ribosyl)acetamidine + L-glutamate + ADP + phosphate + H(+). It participates in purine metabolism; IMP biosynthesis via de novo pathway; 5-amino-1-(5-phospho-D-ribosyl)imidazole from N(2)-formyl-N(1)-(5-phospho-D-ribosyl)glycinamide: step 1/2. Functionally, part of the phosphoribosylformylglycinamidine synthase complex involved in the purines biosynthetic pathway. Catalyzes the ATP-dependent conversion of formylglycinamide ribonucleotide (FGAR) and glutamine to yield formylglycinamidine ribonucleotide (FGAM) and glutamate. The FGAM synthase complex is composed of three subunits. PurQ produces an ammonia molecule by converting glutamine to glutamate. PurL transfers the ammonia molecule to FGAR to form FGAM in an ATP-dependent manner. PurS interacts with PurQ and PurL and is thought to assist in the transfer of the ammonia molecule from PurQ to PurL. The chain is Phosphoribosylformylglycinamidine synthase subunit PurL from Acidiphilium cryptum (strain JF-5).